The sequence spans 550 residues: Alkaline phosphatase PhoV (550 aa).

The N-terminal stretch at 1–20 (MKIKLLCISLAVLFCSSANA) is a signal peptide. Residues D48 and T89 each contribute to the Zn(2+) site. The Phosphothreonine intermediate role is filled by T89. Substrate is bound by residues N110 and 171-173 (KDR). Zn(2+)-binding residues include D313, H317, D360, H361, and H491.

The cofactor is Zn(2+).

The protein localises to the cell inner membrane. The enzyme catalyses a phosphate monoester + H2O = an alcohol + phosphate. With respect to regulation, subject to competitive inhibition by phosphate. Inhibited by manganese. Magnesium mildly increases enzyme activity when the zinc concentration is suboptimal. Optimal activity is dependent on the presence of 0.01-2% Triton X-100. Triton X-100 at a concentration of 0.05% increases the activity about fivefold relative to that in its absence. The enzyme is even active in Triton X-100 concentrations up to 80%. 50% inhibition by 4 mM EDTA and 50% inhibition by 48 mM sodium citrate. Alkaline phosphatase with broad substrate specificity. The polypeptide is Alkaline phosphatase PhoV (Synechococcus elongatus (strain ATCC 33912 / PCC 7942 / FACHB-805) (Anacystis nidulans R2)).